A 383-amino-acid polypeptide reads, in one-letter code: UDP-N-acetylglucosamine 2-epimerase (383 aa).

Belongs to the UDP-N-acetylglucosamine 2-epimerase family.

The enzyme catalyses UDP-N-acetyl-alpha-D-glucosamine = UDP-N-acetyl-alpha-D-mannosamine. It functions in the pathway capsule biogenesis; capsule polysaccharide biosynthesis. Functionally, non-hydrolyzing C2-epimerase involved in the biosynthesis of capsular polysaccharides. Catalyzes the C2 epimerization of UDP-N-acetylglucosamine (UDP-GlcNAc) to form UDP-N-acetylmannosamine (UDP-ManNAc). The sequence is that of UDP-N-acetylglucosamine 2-epimerase from Campylobacter jejuni.